The sequence spans 337 residues: Large ribosomal subunit protein uL3 (337 aa).

The interval 1–26 is disordered; it reads MTRHHQPRKGSVAFSPRKRVARETPR.

The protein belongs to the universal ribosomal protein uL3 family. In terms of assembly, part of the 50S ribosomal subunit. Forms a cluster with proteins L14 and L24e.

Its function is as follows. One of the primary rRNA binding proteins, it binds directly near the 3'-end of the 23S rRNA, where it nucleates assembly of the 50S subunit. The sequence is that of Large ribosomal subunit protein uL3 from Methanosphaera stadtmanae (strain ATCC 43021 / DSM 3091 / JCM 11832 / MCB-3).